Reading from the N-terminus, the 164-residue chain is Large ribosomal subunit protein uL10 (164 aa).

Belongs to the universal ribosomal protein uL10 family. As to quaternary structure, part of the ribosomal stalk of the 50S ribosomal subunit. The N-terminus interacts with L11 and the large rRNA to form the base of the stalk. The C-terminus forms an elongated spine to which L12 dimers bind in a sequential fashion forming a multimeric L10(L12)X complex.

Functionally, forms part of the ribosomal stalk, playing a central role in the interaction of the ribosome with GTP-bound translation factors. The sequence is that of Large ribosomal subunit protein uL10 from Photobacterium profundum (strain SS9).